The chain runs to 473 residues: Photosystem II CP43 reaction center protein (473 aa).

Residues 1–14 (MKTLYSPRRFYPVE) constitute a propeptide that is removed on maturation. Threonine 15 is subject to N-acetylthreonine. Threonine 15 is modified (phosphothreonine). 5 consecutive transmembrane segments (helical) span residues 69-93 (LFEVAHFIPEKPMYEQGLILLPHLA), 134-155 (LIGPETLEESFPFFGYAWKDRN), 178-200 (KALFFGGIYDTWAPGGGDVRKIT), 255-275 (KPFAWTRRAFVWSGEAYLSYS), and 291-312 (WFNNTAYPSEFYGPTGPEASQA). Glutamate 367 lines the [CaMn4O5] cluster pocket. A helical membrane pass occupies residues 447 to 471 (RARAAAAGFEKGIDRDLEPVLFMTP).

The protein belongs to the PsbB/PsbC family. PsbC subfamily. In terms of assembly, PSII is composed of 1 copy each of membrane proteins PsbA, PsbB, PsbC, PsbD, PsbE, PsbF, PsbH, PsbI, PsbJ, PsbK, PsbL, PsbM, PsbT, PsbX, PsbY, PsbZ, Psb30/Ycf12, at least 3 peripheral proteins of the oxygen-evolving complex and a large number of cofactors. It forms dimeric complexes. The cofactor is Binds multiple chlorophylls and provides some of the ligands for the Ca-4Mn-5O cluster of the oxygen-evolving complex. It may also provide a ligand for a Cl- that is required for oxygen evolution. PSII binds additional chlorophylls, carotenoids and specific lipids..

Its subcellular location is the plastid. It localises to the chloroplast thylakoid membrane. One of the components of the core complex of photosystem II (PSII). It binds chlorophyll and helps catalyze the primary light-induced photochemical processes of PSII. PSII is a light-driven water:plastoquinone oxidoreductase, using light energy to abstract electrons from H(2)O, generating O(2) and a proton gradient subsequently used for ATP formation. This is Photosystem II CP43 reaction center protein from Welwitschia mirabilis (Tree tumbo).